The primary structure comprises 509 residues: Proton-gated ion channel subunit pbo-5 (509 aa).

The N-terminal stretch at 1 to 21 (MTRLSILQHLLTFLILSKINA) is a signal peptide. Residues 22-275 (TSTTESYFDS…ISLKRRPLFY (254 aa)) are Extracellular-facing. An intrachain disulfide couples Cys193 to Cys207. 3 helical membrane-spanning segments follow: residues 276–296 (MVTL…GLFA), 310–330 (LGVT…EKVP), and 336–356 (VPLL…AAMT). Residues 357-487 (TGIVMKVHRL…GYVRISERLD (131 aa)) lie on the Cytoplasmic side of the membrane. The helical transmembrane segment at 488–508 (ILFMFLFLSTVTIPVAVLFYL) threads the bilayer.

Belongs to the ligand-gated ion channel (TC 1.A.9) family. Acetylcholine receptor (TC 1.A.9.1) subfamily. As to quaternary structure, the functional channel is a heterooligomer of pbo-5 and pbo-6. May self-associate to form homooligomers with negligible ion channel activity. Expressed in the posterior body muscles. Also detected in the RIFL, RIFR and RIS head neurons.

Its subcellular location is the membrane. Functionally, forms a proton-gated ion channel with pbo-6 that is activated by acidification of the posterior coelomic space, leading to posterior body wall muscle contraction (pBoc) during the defecation cycle. Probably by regulating the defecation motor program, required for fatty acid uptake by intestinal cells. Does not bind neurotransmitters such as acetylcholine, gamma-aminobutyric acid, glycine, serotonin, glutamate or choline. The chain is Proton-gated ion channel subunit pbo-5 from Caenorhabditis elegans.